Here is a 1421-residue protein sequence, read N- to C-terminus: Envelopment polyprotein (1421 aa).

A signal peptide spans Met-1–Gly-20. Over Glu-21–Cys-479 the chain is Lumenal. Positions Ser-22–Ala-31 are enriched in low complexity. The interval Ser-22–Pro-42 is disordered. Residues Asn-97 and Asn-346 are each glycosylated (N-linked (GlcNAc...) asparagine; by host). The helical transmembrane segment at Leu-480–Val-500 threads the bilayer. Topologically, residues Tyr-501–Ser-610 are cytoplasmic. A helical membrane pass occupies residues Trp-611 to Thr-631. Topologically, residues Thr-632–Glu-643 are lumenal. Asn-639 carries N-linked (GlcNAc...) asparagine; by host glycosylation. A helical transmembrane segment spans residues Cys-644–Leu-664. Residues Lys-665–Arg-708 are Cytoplasmic-facing. Residues Val-709–Ala-729 form a helical membrane-spanning segment. A propeptide spanning residues Ala-722–Leu-776 is cleaved from the precursor. At Gln-730–Ser-1330 the chain is on the lumenal side. 2 disulfides stabilise this stretch: Cys-901–Cys-1096 and Cys-929–Cys-934. N-linked (GlcNAc...) asparagine; by host glycans are attached at residues Asn-1081 and Asn-1299. A helical transmembrane segment spans residues Ile-1331–Tyr-1351. Topologically, residues Gly-1352 to Val-1421 are cytoplasmic.

The protein belongs to the nairovirus envelope glycoprotein family. Heterodimer with glycoprotein C; in prefusion state. As to quaternary structure, heterodimer with glycoprotein N; in prefusion state. Homotrimeric; in postfusion state. Specific enzymatic cleavage by host MBTPS1/S1P/SKI-1 endopeptidase yield glycoprotein N. Specific enzymatic cleavages by host furin-like protease and MBTPS1/S1P endopeptidase yield GP38. In terms of processing, glycosylated.

The protein resides in the host endoplasmic reticulum membrane. The protein localises to the virion membrane. Its subcellular location is the host Golgi apparatus membrane. Functionally, glycoprotein N and glycoprotein C interact with each other and are present at the surface of the virion. Glycoprotein N probably locks the Gn-Gc complex in a prefusion state. Glycoprotein N and glycoprotein C are able to attach the virion to host cell receptors. This attachment induces virion internalization predominantly through clathrin-dependent endocytosis. In terms of biological role, glycoprotein C and glycoprotein N interact with each other and are present at the surface of the virion. The spikes at the surface of the virion are formed by an N-terminal extension of glycoprotein C. Glycoprotein N and glycoprotein C are able to attach the virion to host cell receptors. This attachment induces virion internalization predominantly through clathrin-dependent endocytosis. Class II fusion protein that promotes fusion of viral membrane with host endosomal membrane after endocytosis of the virion. Exposure to potassium is necessary for the conformational change leading to fusion. The polypeptide is Envelopment polyprotein (GP) (Ixodes).